Here is a 91-residue protein sequence, read N- to C-terminus: Putative regulatory protein DSY2730 (91 aa).

It belongs to the RemA family.

This is Putative regulatory protein DSY2730 from Desulfitobacterium hafniense (strain Y51).